A 560-amino-acid chain; its full sequence is Serine palmitoyltransferase 2 (560 aa).

The chain crosses the membrane as a helical span at residues 65–85 (PMLVAVLTYVGYGVLTLFGYL). The residue at position 377 (K377) is an N6-(pyridoxal phosphate)lysine.

The protein belongs to the class-II pyridoxal-phosphate-dependent aminotransferase family. Component of the serine palmitoyltransferase (SPT) complex, which is composed of SPTLC1, SPTLC2 or SPTLC3 and SPTSSA or SPTSSB. The heterodimer consisting of SPTLC1 and SPTLC2/SPTLC3 forms the catalytic core of the enzyme, while SPTSSA or SPTSSB subunits determine substrate specificity. SPT also interacts with ORMDL proteins, especially ORMDL3, which negatively regulate SPT activity in the presence of ceramides. Forms dimers of heterodimers with SPTLC1. It depends on pyridoxal 5'-phosphate as a cofactor. Expressed in astrocytes.

The protein localises to the endoplasmic reticulum membrane. The catalysed reaction is L-serine + hexadecanoyl-CoA + H(+) = 3-oxosphinganine + CO2 + CoA. The enzyme catalyses octadecanoyl-CoA + L-serine + H(+) = 3-oxoeicosasphinganine + CO2 + CoA. It functions in the pathway lipid metabolism; sphingolipid metabolism. With respect to regulation, SPT complex catalytic activity is negatively regulated by ORMDL proteins, including ORMDL3, in the presence of ceramides. This mechanism allows to maintain ceramide levels at sufficient concentrations for the production of complex sphingolipids, but which prevents the accumulation of ceramides to levels that trigger apoptosis. In terms of biological role, component of the serine palmitoyltransferase multisubunit enzyme (SPT) that catalyzes the initial and rate-limiting step in sphingolipid biosynthesis by condensing L-serine and activated acyl-CoA (most commonly palmitoyl-CoA) to form long-chain bases. The SPT complex is composed of SPTLC1, SPTLC2 or SPTLC3 and SPTSSA or SPTSSB. Within this complex, the heterodimer consisting of SPTLC1 and SPTLC2/SPTLC3 forms the catalytic core. The composition of the serine palmitoyltransferase (SPT) complex determines the substrate preference. The SPTLC1-SPTLC2-SPTSSA complex shows a strong preference for C16-CoA substrate, while the SPTLC1-SPTLC3-SPTSSA isozyme uses both C14-CoA and C16-CoA as substrates, with a slight preference for C14-CoA. The SPTLC1-SPTLC2-SPTSSB complex shows a strong preference for C18-CoA substrate, while the SPTLC1-SPTLC3-SPTSSB isozyme displays an ability to use a broader range of acyl-CoAs, without apparent preference. Crucial for adipogenesis. The protein is Serine palmitoyltransferase 2 of Rattus norvegicus (Rat).